The following is a 170-amino-acid chain: Acireductone dioxygenase (170 aa).

Positions 99, 101, 105, and 144 each coordinate Fe(2+). The Ni(2+) site is built by His-99, His-101, Glu-105, and His-144.

It belongs to the acireductone dioxygenase (ARD) family. Monomer. Requires Fe(2+) as cofactor. Ni(2+) is required as a cofactor.

It catalyses the reaction 1,2-dihydroxy-5-(methylsulfanyl)pent-1-en-3-one + O2 = 3-(methylsulfanyl)propanoate + CO + formate + 2 H(+). The catalysed reaction is 1,2-dihydroxy-5-(methylsulfanyl)pent-1-en-3-one + O2 = 4-methylsulfanyl-2-oxobutanoate + formate + 2 H(+). It participates in amino-acid biosynthesis; L-methionine biosynthesis via salvage pathway; L-methionine from S-methyl-5-thio-alpha-D-ribose 1-phosphate: step 5/6. Catalyzes 2 different reactions between oxygen and the acireductone 1,2-dihydroxy-3-keto-5-methylthiopentene (DHK-MTPene) depending upon the metal bound in the active site. Fe-containing acireductone dioxygenase (Fe-ARD) produces formate and 2-keto-4-methylthiobutyrate (KMTB), the alpha-ketoacid precursor of methionine in the methionine recycle pathway. Ni-containing acireductone dioxygenase (Ni-ARD) produces methylthiopropionate, carbon monoxide and formate, and does not lie on the methionine recycle pathway. This chain is Acireductone dioxygenase, found in Bacillus anthracis.